Here is a 418-residue protein sequence, read N- to C-terminus: Putative competence-damage inducible protein (418 aa).

This sequence belongs to the CinA family.

The polypeptide is Putative competence-damage inducible protein (Streptococcus pneumoniae (strain 70585)).